Reading from the N-terminus, the 416-residue chain is Enolase (416 aa).

Q156 contacts (2R)-2-phosphoglycerate. E200 functions as the Proton donor in the catalytic mechanism. Positions 236, 281, and 308 each coordinate Mg(2+). (2R)-2-phosphoglycerate-binding residues include K333, R362, S363, and K384. K333 (proton acceptor) is an active-site residue.

It belongs to the enolase family. The cofactor is Mg(2+).

It localises to the cytoplasm. It is found in the secreted. The protein resides in the cell surface. It carries out the reaction (2R)-2-phosphoglycerate = phosphoenolpyruvate + H2O. The protein operates within carbohydrate degradation; glycolysis; pyruvate from D-glyceraldehyde 3-phosphate: step 4/5. Its function is as follows. Catalyzes the reversible conversion of 2-phosphoglycerate (2-PG) into phosphoenolpyruvate (PEP). It is essential for the degradation of carbohydrates via glycolysis. The chain is Enolase from Methanothermobacter thermautotrophicus (strain ATCC 29096 / DSM 1053 / JCM 10044 / NBRC 100330 / Delta H) (Methanobacterium thermoautotrophicum).